The chain runs to 891 residues: MAPVPDPNSVGGGAKRDEATTKIPSKDSKKKDDKKEEDLSEEDLQLKQNLELYVERVQDPNPELQKIALESMRKEIRDSTSSMTSVPKPLKFLRPHYGVLKEFHAKMAESDLKKMLADILSVLALTMSAEGERESLNYRLNGSESDIGSWGHEYVRNLAGEIAKEYTIRQGEESSIEDLMDLVQQIVSFHMKHNAETEAVDLLMDVEDLDLLLEHVDNTNFRRTCNYLTSAAKYLPGPDDMLVLDIAYMIYIKFAEYPNALQIALFLDNMQYVKQVFTSCTDLVKKKQFCYMIARHGMTFELDQEMVANDEDKEALQDIVNNSKLSEGYLTLARDIEVMEAKTPEDIYKAHLLDGRASSGPSVDSARQNLSATFVNAFVNAGFGQDKLMTVPSDSTSGSAGNWLFKNKEHGKTSAVASLGMIQLWDVETGLGHLDKYFHSNDNPVVAGALLGVGIVNCGIKNDCDPAFALLSGYIDNEDSSVRIGAIMGLGIAYAGSQNDQIKIRLSPILNDANAPLDVIAFAALSLGMIYVGSCNEEVAQSIIFALMDRSEAELGEALTRFLPLGLGLLYLGKQESVEATAEVSKTFNEKIRKYCDMTLLSCAYAGTGNVLKVQDLLAQCGEHLVKGDIHQGPAVIGLAMVAMSEELGLDMEIRSLERVLQYGEQNIRRAVPLALGLLCISNPKVTVMDTLSRLSHDTDSEVAMAAIISLGLIGAGTNNARIAGMLRNLSSYYYKDASLLFCVRIAQGFVHMGKGLLTLNPFHSERLLLSPTALAGIVTLLHACLDMKSIILGKYHYVLYFLVLAMQPRMMLTVDQSLKPISVPVRVGQAVDVVGQAGRPKTITGFQTHSTPVLLAAGERAELATEKYIPLSPILEGFVILKENPDYREE.

The disordered stretch occupies residues 1–43; that stretch reads MAPVPDPNSVGGGAKRDEATTKIPSKDSKKKDDKKEEDLSEED. Over residues 14 to 37 the composition is skewed to basic and acidic residues; the sequence is AKRDEATTKIPSKDSKKKDDKKEE. PC repeat units lie at residues 414 to 447, 448 to 484, 485 to 519, 522 to 556, 565 to 594, 674 to 705, and 724 to 739; these read SAVA…PVVA, GALL…SVRI, GAIM…PLDV, FAAL…AELG, LGLG…KIRK, LALG…EVAM, and AGML…KDAS.

It belongs to the proteasome subunit S2 family. Component of the 19S regulatory particle (RP/PA700) base subcomplex of the 26S proteasome. The 26S proteasome is composed of a core protease (CP), known as the 20S proteasome, capped at one or both ends by the 19S regulatory particle (RP/PA700). The RP/PA700 complex is composed of at least 17 different subunits in two subcomplexes, the base and the lid, which form the portions proximal and distal to the 20S proteolytic core, respectively. Ubiquitinated. Expressed in stems, leaves, buds, flowers, siliques and developing seeds.

Its function is as follows. Acts as a regulatory subunit of the 26 proteasome which is involved in the ATP-dependent degradation of ubiquitinated proteins. This Arabidopsis thaliana (Mouse-ear cress) protein is 26S proteasome non-ATPase regulatory subunit 2 homolog B (RPN1B).